The sequence spans 385 residues: Probable splicing factor YJU2B (385 aa).

The interval 1 to 26 (MGERKGQNKYYPPDFNPEKHGSLNRY) is disordered. Phosphoserine is present on Ser-40. The stretch at 182 to 215 (LNSMLRRHFREKKKAMQEEEEKDQALQAKANLAI) forms a coiled coil. The tract at residues 256 to 385 (FPSAQGPSTS…VADYSDSESE (130 aa)) is disordered. Residues 260-270 (QGPSTSSSKAS) are compositionally biased toward polar residues. Ser-306 is subject to Phosphoserine. Composition is skewed to polar residues over residues 307-316 (PQCTADNSLS) and 359-373 (GSSQ…TPNA).

This sequence belongs to the CWC16 family.

It localises to the nucleus. In terms of biological role, may be involved in mRNA splicing. This is Probable splicing factor YJU2B from Rattus norvegicus (Rat).